Consider the following 312-residue polypeptide: Glyoxylate/hydroxypyruvate reductase A (312 aa).

Residue R227 is part of the active site. The active-site Proton donor is H275.

Belongs to the D-isomer specific 2-hydroxyacid dehydrogenase family. GhrA subfamily.

It is found in the cytoplasm. It carries out the reaction glycolate + NADP(+) = glyoxylate + NADPH + H(+). The catalysed reaction is (R)-glycerate + NAD(+) = 3-hydroxypyruvate + NADH + H(+). The enzyme catalyses (R)-glycerate + NADP(+) = 3-hydroxypyruvate + NADPH + H(+). Its function is as follows. Catalyzes the NADPH-dependent reduction of glyoxylate and hydroxypyruvate into glycolate and glycerate, respectively. The protein is Glyoxylate/hydroxypyruvate reductase A of Salmonella heidelberg (strain SL476).